The chain runs to 223 residues: UPF0502 protein Avin_04790 (223 aa).

The protein belongs to the UPF0502 family.

This is UPF0502 protein Avin_04790 from Azotobacter vinelandii (strain DJ / ATCC BAA-1303).